A 363-amino-acid polypeptide reads, in one-letter code: Phosphoserine aminotransferase (363 aa).

R42 is a binding site for L-glutamate. Pyridoxal 5'-phosphate is bound by residues 76–77 (AS), W101, T151, D170, and Q193. At K194 the chain carries N6-(pyridoxal phosphate)lysine. 234–235 (NT) lines the pyridoxal 5'-phosphate pocket.

Belongs to the class-V pyridoxal-phosphate-dependent aminotransferase family. SerC subfamily. As to quaternary structure, homodimer. Requires pyridoxal 5'-phosphate as cofactor.

It is found in the cytoplasm. The enzyme catalyses O-phospho-L-serine + 2-oxoglutarate = 3-phosphooxypyruvate + L-glutamate. The catalysed reaction is 4-(phosphooxy)-L-threonine + 2-oxoglutarate = (R)-3-hydroxy-2-oxo-4-phosphooxybutanoate + L-glutamate. It functions in the pathway amino-acid biosynthesis; L-serine biosynthesis; L-serine from 3-phospho-D-glycerate: step 2/3. Functionally, catalyzes the reversible conversion of 3-phosphohydroxypyruvate to phosphoserine and of 3-hydroxy-2-oxo-4-phosphonooxybutanoate to phosphohydroxythreonine. The polypeptide is Phosphoserine aminotransferase (Listeria monocytogenes serovar 1/2a (strain ATCC BAA-679 / EGD-e)).